A 246-amino-acid polypeptide reads, in one-letter code: Bis(5'-nucleosyl)-tetraphosphatase PrpE [asymmetrical] (246 aa).

Belongs to the PrpE family. Ni(2+) is required as a cofactor.

It carries out the reaction P(1),P(4)-bis(5'-guanosyl) tetraphosphate + H2O = GMP + GTP + 2 H(+). Its function is as follows. Asymmetrically hydrolyzes Ap4p to yield AMP and ATP. This Bacillus cereus (strain ATCC 14579 / DSM 31 / CCUG 7414 / JCM 2152 / NBRC 15305 / NCIMB 9373 / NCTC 2599 / NRRL B-3711) protein is Bis(5'-nucleosyl)-tetraphosphatase PrpE [asymmetrical].